The following is a 238-amino-acid chain: Ribonuclease PH (238 aa).

Phosphate contacts are provided by residues Arg-86 and Gly-124–Arg-126.

The protein belongs to the RNase PH family. Homohexameric ring arranged as a trimer of dimers.

It catalyses the reaction tRNA(n+1) + phosphate = tRNA(n) + a ribonucleoside 5'-diphosphate. In terms of biological role, phosphorolytic 3'-5' exoribonuclease that plays an important role in tRNA 3'-end maturation. Removes nucleotide residues following the 3'-CCA terminus of tRNAs; can also add nucleotides to the ends of RNA molecules by using nucleoside diphosphates as substrates, but this may not be physiologically important. Probably plays a role in initiation of 16S rRNA degradation (leading to ribosome degradation) during starvation. The sequence is that of Ribonuclease PH from Anaeromyxobacter sp. (strain Fw109-5).